A 383-amino-acid chain; its full sequence is Probable 2-succinylbenzoate--CoA ligase (383 aa).

This sequence belongs to the ATP-dependent AMP-binding enzyme family. MenE subfamily.

The enzyme catalyses 2-succinylbenzoate + ATP + CoA = 2-succinylbenzoyl-CoA + AMP + diphosphate. It participates in quinol/quinone metabolism; 1,4-dihydroxy-2-naphthoate biosynthesis; 1,4-dihydroxy-2-naphthoate from chorismate: step 5/7. Its pathway is quinol/quinone metabolism; menaquinone biosynthesis. Converts 2-succinylbenzoate (OSB) to 2-succinylbenzoyl-CoA (OSB-CoA). May be involved in the biosynthesis of menaquinone. The protein is Probable 2-succinylbenzoate--CoA ligase (menE) of Mycobacterium tuberculosis (strain CDC 1551 / Oshkosh).